Consider the following 208-residue polypeptide: Vacuolar iron transporter homolog 5 (208 aa).

At 1–41 the chain is on the cytoplasmic side; sequence MAAMMNNERSSSNKLQVDAENPAAVGDELDLAARANWLRAA. The chain crosses the membrane as a helical span at residues 42 to 62; sequence VLGANDGLVSTASLMLGVGAV. The Vacuolar segment spans residues 63 to 69; the sequence is KAEARAM. A helical membrane pass occupies residues 70–90; the sequence is VISGFAGLLAGACSMAIGEFV. Topologically, residues 91–125 are cytoplasmic; the sequence is SVCSQRDVELAQLERDGKRGGEEEKALPSPAQAAA. A helical membrane pass occupies residues 126–146; sequence ASAMAFSVGAVVPLLAAGFIV. Over 147–151 the chain is Vacuolar; it reads NYRLR. The helical transmembrane segment at 152-172 threads the bilayer; it reads IAVVVAVASVALAAFGCVGAV. Topologically, residues 173–184 are cytoplasmic; it reads LGRAAVARSSAR. Residues 185–205 form a helical membrane-spanning segment; the sequence is VVLGGWAAMGITFGLMRLFKA. Residues 206–208 are Vacuolar-facing; the sequence is SGI.

This sequence belongs to the CCC1 family.

The protein resides in the vacuole membrane. The catalysed reaction is Fe(2+)(in) = Fe(2+)(out). Functionally, probable vacuolar iron transporter that may be involved in the regulation of iron distribution throughout the plant. This is Vacuolar iron transporter homolog 5 from Oryza sativa subsp. japonica (Rice).